Reading from the N-terminus, the 216-residue chain is MSVKIHYQNTHFITSAPDIRHLPADEGIEIAFAGRSNAGKSSALNRLTNQKNLAKTSKTPGRTQLINLFKVTEGCHIVDLPGYGFAQVPLEMKNKWQKSLGEYLQKRECLKGLVVLMDIRHPMKDLDQQMIFWAIESRIPVQVLLTKADKLKSGARKAELLKVRKLAETFGGDVQVDVYSSLKGLGVDQLRAKLDTWFAPALAHLLEDEEGSNSAE.

In terms of domain architecture, EngB-type G spans 26–200 (EGIEIAFAGR…RAKLDTWFAP (175 aa)). GTP-binding positions include 34 to 41 (GRSNAGKS), 61 to 65 (GRTQL), 79 to 82 (DLPG), 146 to 149 (TKAD), and 179 to 181 (YSS). Residues Ser-41 and Thr-63 each coordinate Mg(2+).

The protein belongs to the TRAFAC class TrmE-Era-EngA-EngB-Septin-like GTPase superfamily. EngB GTPase family. Mg(2+) is required as a cofactor.

Its function is as follows. Necessary for normal cell division and for the maintenance of normal septation. The sequence is that of Probable GTP-binding protein EngB from Vibrio vulnificus (strain CMCP6).